The sequence spans 31 residues: GSIPCAESCVYIPCITGIAGCSCKNKVCYYN.

The cyclopeptide (Gly-Asn) cross-link spans 1–31 (GSIPCAESCVYIPCITGIAGCSCKNKVCYYN). 3 cysteine pairs are disulfide-bonded: Cys-5–Cys-21, Cys-9–Cys-23, and Cys-14–Cys-28.

Belongs to the cyclotide family. Bracelet subfamily. This is a cyclic peptide.

Probably participates in a plant defense mechanism. This is Cyclotide vico-B from Viola cotyledon (Violeta).